The following is a 392-amino-acid chain: Lipid-A-disaccharide synthase (392 aa).

This sequence belongs to the LpxB family.

The catalysed reaction is a lipid X + a UDP-2-N,3-O-bis[(3R)-3-hydroxyacyl]-alpha-D-glucosamine = a lipid A disaccharide + UDP + H(+). The protein operates within bacterial outer membrane biogenesis; LPS lipid A biosynthesis. In terms of biological role, condensation of UDP-2,3-diacylglucosamine and 2,3-diacylglucosamine-1-phosphate to form lipid A disaccharide, a precursor of lipid A, a phosphorylated glycolipid that anchors the lipopolysaccharide to the outer membrane of the cell. The chain is Lipid-A-disaccharide synthase from Bradyrhizobium diazoefficiens (strain JCM 10833 / BCRC 13528 / IAM 13628 / NBRC 14792 / USDA 110).